A 220-amino-acid chain; its full sequence is MRMLEKGKLIVASHNAGKLREFDGLIGPFGFEVSSVAALGLPEPDETGTTFEENAYIKALAAAKATGFPALSDDSGLMVDALDGEPGVYTANWAETEDGKRDFDMAMQKVENLLQEKGATTPDKRKARFVSVICLAWPDGEAEYFRGEVEGTLVWPPRGNIGFGYDPVFLPDGYGKTFGEMTAEEKHGWKPGDASALSHRARAFKLFAEKALNVVSAPAE.

Residue 13-18 (SHNAGK) coordinates substrate. Mg(2+) is bound by residues Asp-45 and Asp-74. Asp-74 serves as the catalytic Proton acceptor. Substrate-binding positions include Ser-75, 163–166 (FGYD), Lys-186, and 199–200 (HR).

Belongs to the HAM1 NTPase family. Homodimer. Requires Mg(2+) as cofactor.

It carries out the reaction XTP + H2O = XMP + diphosphate + H(+). It catalyses the reaction dITP + H2O = dIMP + diphosphate + H(+). The enzyme catalyses ITP + H2O = IMP + diphosphate + H(+). Pyrophosphatase that catalyzes the hydrolysis of nucleoside triphosphates to their monophosphate derivatives, with a high preference for the non-canonical purine nucleotides XTP (xanthosine triphosphate), dITP (deoxyinosine triphosphate) and ITP. Seems to function as a house-cleaning enzyme that removes non-canonical purine nucleotides from the nucleotide pool, thus preventing their incorporation into DNA/RNA and avoiding chromosomal lesions. This chain is dITP/XTP pyrophosphatase, found in Brucella melitensis biotype 1 (strain ATCC 23456 / CCUG 17765 / NCTC 10094 / 16M).